A 198-amino-acid chain; its full sequence is Phosphoheptose isomerase (198 aa).

Positions isoleucine 40 to arginine 198 constitute an SIS domain. Asparagine 55–glycine 57 provides a ligand contact to substrate. Residues histidine 64 and glutamate 68 each contribute to the Zn(2+) site. Substrate is bound by residues glutamate 68, asparagine 97–aspartate 98, serine 123–serine 125, serine 128, and glutamine 175. Glutamine 175 and histidine 183 together coordinate Zn(2+).

It belongs to the SIS family. GmhA subfamily. In terms of assembly, homotetramer. The cofactor is Zn(2+).

It is found in the cytoplasm. It carries out the reaction 2 D-sedoheptulose 7-phosphate = D-glycero-alpha-D-manno-heptose 7-phosphate + D-glycero-beta-D-manno-heptose 7-phosphate. Its pathway is carbohydrate biosynthesis; D-glycero-D-manno-heptose 7-phosphate biosynthesis; D-glycero-alpha-D-manno-heptose 7-phosphate and D-glycero-beta-D-manno-heptose 7-phosphate from sedoheptulose 7-phosphate: step 1/1. Its function is as follows. Catalyzes the isomerization of sedoheptulose 7-phosphate in D-glycero-D-manno-heptose 7-phosphate. This chain is Phosphoheptose isomerase, found in Bradyrhizobium sp. (strain ORS 278).